The chain runs to 377 residues: UPF0754 membrane protein YheB (377 aa).

2 helical membrane-spanning segments follow: residues 1 to 21 (MGIA…GAVT) and 357 to 377 (YLGG…VILF).

Belongs to the UPF0754 family.

The protein localises to the cell membrane. This Bacillus subtilis (strain 168) protein is UPF0754 membrane protein YheB (yheB).